A 458-amino-acid chain; its full sequence is Ammonium transporter Rh type B (458 aa).

Topologically, residues 1-13 (MAKSPRRVAGRRL) are cytoplasmic. Residues 14–34 (LLPLLCLFFQGATAILFAIFV) form a helical membrane-spanning segment. Topologically, residues 35–61 (RYDQQTDAALWHGGNHSNADNEFYFRY) are extracellular. A glycan (N-linked (GlcNAc...) asparagine) is linked at asparagine 49. The helical transmembrane segment at 62–82 (PSFQDVHAMVFVGFGFLMVFL) threads the bilayer. The Cytoplasmic portion of the chain corresponds to 83 to 86 (QRYG). Residues 87–107 (YSSLGFTFLLGAFALQWATLV) form a helical membrane-spanning segment. Residues 108-124 (QGFLHSFHGGHIHVGME) lie on the Extracellular side of the membrane. Residues 125–145 (SLINADFCAGAVLISFGAVLG) traverse the membrane as a helical segment. Residues 146–149 (KTGP) are Cytoplasmic-facing. The helical transmembrane segment at 150–170 (AQLLLMALLEVALFGLNEFVL) threads the bilayer. Residues 171 to 178 (LCLLGVRD) are Extracellular-facing. Residues 179-201 (AGGSMTIHTFGAYFGLVLSRVLY) form a helical membrane-spanning segment. The Cytoplasmic portion of the chain corresponds to 202-219 (RPHLEKSQHRQGSVYHSD). The helical transmembrane segment at 220-240 (LFAMIGTIFLWIFWPSFNSAL) threads the bilayer. Over 241–251 (TSRGDGQPRTA) the chain is Extracellular. Residues 252–272 (LNTYYSLTASTLSTFALSALV) form a helical membrane-spanning segment. Over 273-282 (GKDGRLDMVH) the chain is Cytoplasmic. The chain crosses the membrane as a helical span at residues 283 to 303 (VQNAALAGGVVVGTASEMMLT). Position 304 (proline 304) is a topological domain, extracellular. A helical transmembrane segment spans residues 305–325 (FGALAAGCLAGAISTLGYKFF). At 326–346 (TPILESKLKIQDTCGVHNLHG) the chain is on the cytoplasmic side. Residues 347-367 (MPGVLGALLGALMTGLTTHEA) traverse the membrane as a helical segment. The Extracellular segment spans residues 368–393 (YGDGLQSVFPLIAEGQRSATSQAIYQ). The chain crosses the membrane as a helical span at residues 394 to 414 (LFGLSVTLLFASAGGVLGGLL). At 415-458 (LKLPFLDAPPDSQCYEDQMCWEVPGEHGYEAQEALRVEEPDTEA) the chain is on the cytoplasmic side. Residues 416–424 (KLPFLDAPP) form an interaction with ANK3 region. The short motif at 429–432 (YEDQ) is the Basolateral sorting signal element.

This sequence belongs to the ammonium transporter (TC 2.A.49) family. Rh subfamily. Interacts (via C-terminus) with ANK2 and ANK3; required for targeting to the basolateral membrane. In terms of processing, N-glycosylated.

It localises to the cell membrane. The protein localises to the basolateral cell membrane. The catalysed reaction is NH4(+)(in) = NH4(+)(out). It catalyses the reaction methylamine(out) = methylamine(in). It carries out the reaction CO2(out) = CO2(in). Ammonium transporter involved in the maintenance of acid-base homeostasis. Transports ammonium and its related derivative methylammonium across the basolateral plasma membrane of epithelial cells likely contributing to renal transepithelial ammonia transport and ammonia metabolism. May transport either NH4(+) or NH3 ammonia species predominantly mediating an electrogenic NH4(+) transport. May act as a CO2 channel providing for renal acid secretion. The sequence is that of Ammonium transporter Rh type B (RHBG) from Oryctolagus cuniculus (Rabbit).